A 102-amino-acid chain; its full sequence is Large ribosomal subunit protein bL21 (102 aa).

Residues 77–88 (KPKKHTHTKQGH) are compositionally biased toward basic residues. The disordered stretch occupies residues 77 to 102 (KPKKHTHTKQGHRQPYTKVTINKINA). Residues 93 to 102 (TKVTINKINA) show a composition bias toward polar residues.

Belongs to the bacterial ribosomal protein bL21 family. As to quaternary structure, part of the 50S ribosomal subunit. Contacts protein L20.

Its function is as follows. This protein binds to 23S rRNA in the presence of protein L20. This is Large ribosomal subunit protein bL21 from Limosilactobacillus reuteri (strain DSM 20016) (Lactobacillus reuteri).